A 305-amino-acid polypeptide reads, in one-letter code: Uridylate-specific endoribonuclease D (305 aa).

Residues 1 to 17 (MKVYFVFLCLLPSLISG) form the signal peptide. The EndoU domain maps to 33-305 (SNAEIQSLAE…RYVASSYPNI (273 aa)). Active-site residues include histidine 182, histidine 197, and lysine 240. Asparagine 288 carries N-linked (GlcNAc...) asparagine glycosylation.

The protein belongs to the ENDOU family. As to quaternary structure, monomer. The cofactor is Mn(2+).

The protein resides in the secreted. The enzyme catalyses ribonucleotidyl-uridine-RNA = a 5'-end dephospho-uridine-RNA + a 3'-end 2',3'-cyclophospho-ribonucleotide-RNA. In terms of biological role, endoribonuclease that cleaves single-stranded RNAs at 5' of uridylates and releases a product with a 2',3'-cyclic phosphate at the 3'-end. In Xenopus laevis (African clawed frog), this protein is Uridylate-specific endoribonuclease D (endou-d).